The chain runs to 606 residues: Scavenger receptor class A member 3 (606 aa).

The Cytoplasmic portion of the chain corresponds to 1-56; it reads MKVRSAGSDRDVLCVTEEDLAGEDEDMPSFPCTQEGRAGPRCNRCQKNLSLHTSVR. Residues 57–77 form a helical; Signal-anchor for type II membrane protein membrane-spanning segment; the sequence is ILYLFLTLLLVAVAVLASLVF. Residues 78-606 lie on the Extracellular side of the membrane; the sequence is RKVDSLSEDI…PGPPGNQSPY (529 aa). N-linked (GlcNAc...) asparagine glycosylation is found at Asn115, Asn182, Asn224, Asn257, Asn313, Asn337, Asn365, Asn400, Asn430, and Asn451. The disordered stretch occupies residues 455–606; the sequence is IRGVPGPPGP…PGPPGNQSPY (152 aa). Collagen-like domains lie at 456–558 and 559–601; these read RGVP…PGPS and GPQG…GPPG. Positions 497-516 are enriched in low complexity; the sequence is PQGQPGEPGPVGERGPAGPR. Residues 526-535 show a composition bias toward gly residues; the sequence is GSFGTGGPRG. Composition is skewed to pro residues over residues 548–558 and 591–606; these read PEGPPGSPGPS and PGLP…QSPY.

The protein resides in the endoplasmic reticulum membrane. Its subcellular location is the golgi apparatus membrane. In terms of biological role, seems to protect cells by scavenging oxidative molecules or harmful products of oxidation. This chain is Scavenger receptor class A member 3 (Scara3), found in Mus musculus (Mouse).